The sequence spans 36 residues: Dermonecrotic toxin LgSicTox-beta-LOXN1/LOXN7 (36 aa).

It belongs to the arthropod phospholipase D family. Class II subfamily. Mg(2+) is required as a cofactor. Contains 2 disulfide bonds. As to expression, expressed by the venom gland.

The protein localises to the secreted. It catalyses the reaction an N-(acyl)-sphingosylphosphocholine = an N-(acyl)-sphingosyl-1,3-cyclic phosphate + choline. It carries out the reaction an N-(acyl)-sphingosylphosphoethanolamine = an N-(acyl)-sphingosyl-1,3-cyclic phosphate + ethanolamine. The enzyme catalyses a 1-acyl-sn-glycero-3-phosphocholine = a 1-acyl-sn-glycero-2,3-cyclic phosphate + choline. The catalysed reaction is a 1-acyl-sn-glycero-3-phosphoethanolamine = a 1-acyl-sn-glycero-2,3-cyclic phosphate + ethanolamine. Functionally, dermonecrotic toxins cleave the phosphodiester linkage between the phosphate and headgroup of certain phospholipids (sphingolipid and lysolipid substrates), forming an alcohol (often choline) and a cyclic phosphate. This toxin acts on sphingomyelin (SM). It may also act on ceramide phosphoethanolamine (CPE), lysophosphatidylcholine (LPC) and lysophosphatidylethanolamine (LPE), but not on lysophosphatidylserine (LPS), and lysophosphatidylglycerol (LPG). It acts by transphosphatidylation, releasing exclusively cyclic phosphate products as second products. Induces dermonecrosis, hemolysis, increased vascular permeability, edema, inflammatory response, and platelet aggregation. The sequence is that of Dermonecrotic toxin LgSicTox-beta-LOXN1/LOXN7 from Loxosceles gaucho (Spider).